Here is a 127-residue protein sequence, read N- to C-terminus: Large ribosomal subunit protein uL18 (127 aa).

This sequence belongs to the universal ribosomal protein uL18 family. In terms of assembly, part of the 50S ribosomal subunit; part of the 5S rRNA/L5/L18/L25 subcomplex. Contacts the 5S and 23S rRNAs.

Functionally, this is one of the proteins that bind and probably mediate the attachment of the 5S RNA into the large ribosomal subunit, where it forms part of the central protuberance. The chain is Large ribosomal subunit protein uL18 from Streptomyces coelicolor (strain ATCC BAA-471 / A3(2) / M145).